The following is a 251-amino-acid chain: Pyrroloquinoline-quinone synthase (251 aa).

This sequence belongs to the PqqC family.

The catalysed reaction is 6-(2-amino-2-carboxyethyl)-7,8-dioxo-1,2,3,4,7,8-hexahydroquinoline-2,4-dicarboxylate + 3 O2 = pyrroloquinoline quinone + 2 H2O2 + 2 H2O + H(+). The protein operates within cofactor biosynthesis; pyrroloquinoline quinone biosynthesis. Functionally, ring cyclization and eight-electron oxidation of 3a-(2-amino-2-carboxyethyl)-4,5-dioxo-4,5,6,7,8,9-hexahydroquinoline-7,9-dicarboxylic-acid to PQQ. This chain is Pyrroloquinoline-quinone synthase, found in Pseudomonas putida (strain GB-1).